Consider the following 422-residue polypeptide: UDP-N-acetylglucosamine 1-carboxyvinyltransferase (422 aa).

23–24 (KN) lines the phosphoenolpyruvate pocket. Arg-92 serves as a coordination point for UDP-N-acetyl-alpha-D-glucosamine. The active-site Proton donor is Cys-116. At Cys-116 the chain carries 2-(S-cysteinyl)pyruvic acid O-phosphothioketal. UDP-N-acetyl-alpha-D-glucosamine contacts are provided by residues 121-125 (RPVDL), 161-165 (KVSVG), Asp-306, and Ile-328.

This sequence belongs to the EPSP synthase family. MurA subfamily.

Its subcellular location is the cytoplasm. It catalyses the reaction phosphoenolpyruvate + UDP-N-acetyl-alpha-D-glucosamine = UDP-N-acetyl-3-O-(1-carboxyvinyl)-alpha-D-glucosamine + phosphate. Its pathway is cell wall biogenesis; peptidoglycan biosynthesis. Cell wall formation. Adds enolpyruvyl to UDP-N-acetylglucosamine. The chain is UDP-N-acetylglucosamine 1-carboxyvinyltransferase from Aliivibrio fischeri (strain MJ11) (Vibrio fischeri).